Here is a 363-residue protein sequence, read N- to C-terminus: MSDISPDYPTLQSIGWPWPGPPEEAAWKAVFAAHPQALPARVVEQHRTGYVVADTPEASLKAESLPEWQRPRFPSHERAAVGDWVLMEGKRIVALLPRRTSIKRGAAGAHYHQQVIAANIDTVFIVCGLDADFNPRRIERYLLLVGGGGAQPVVVLTKADQTEHAEDALAVLEELEAQNIPLRAVNAKDPASVAALRPWLGDGRTAVLVGSSGAGKSTLTNTLLGTEKMKTNGVRENDSRGRHTTTHRALIPLPSGACLIDTPGMRELKPTGEEDLAEGGFSDVEALAAQCRFNDCAHIAEPGCAVRAAIEADLLDPERVANYMKLRVEVASAAEKLATRVAQNNRGKGSGKRPASIDRPGRR.

Residues 112 to 268 form the CP-type G domain; sequence HQQVIAANID…LIDTPGMREL (157 aa). Residues 157-160 and 210-218 contribute to the GTP site; these read TKAD and GSSGAGKST. The Zn(2+) site is built by Cys291, Cys296, His298, and Cys304. The disordered stretch occupies residues 340–363; the sequence is RVAQNNRGKGSGKRPASIDRPGRR.

Belongs to the TRAFAC class YlqF/YawG GTPase family. RsgA subfamily. As to quaternary structure, monomer. Associates with 30S ribosomal subunit, binds 16S rRNA. The cofactor is Zn(2+).

The protein resides in the cytoplasm. Its function is as follows. One of several proteins that assist in the late maturation steps of the functional core of the 30S ribosomal subunit. Helps release RbfA from mature subunits. May play a role in the assembly of ribosomal proteins into the subunit. Circularly permuted GTPase that catalyzes slow GTP hydrolysis, GTPase activity is stimulated by the 30S ribosomal subunit. The chain is Small ribosomal subunit biogenesis GTPase RsgA from Xanthomonas oryzae pv. oryzae (strain MAFF 311018).